The primary structure comprises 321 residues: Basic leucine zipper 34 (321 aa).

The tract at residues 97 to 189 is disordered; sequence TDDDNLHSNP…SGNRILDPKR (93 aa). 3 stretches are compositionally biased toward low complexity: residues 110 to 133, 145 to 155, and 172 to 182; these read NNKN…NSFN, NMNNNINNNYN, and SNNNSGDSSGN. Positions 186–238 constitute a bZIP domain; it reads DPKRVKRILANRQSAQRSRVRKLQYISELERSVTSLQAEVSVLSPRVAFLDHQ. The segment at 188-207 is basic motif; sequence KRVKRILANRQSAQRSRVRK. The tract at residues 214 to 235 is leucine-zipper; that stretch reads LERSVTSLQAEVSVLSPRVAFL.

As to quaternary structure, forms heterodimers with BZIP18, BZIP43 and VIP1/BZIP51. As to expression, expressed in vascular tissues of leaves, stems and siliques, anthers, filaments, tapetum, mature pollen grains, pistil vascular tissues and papillar cells, and funiculi.

The protein resides in the nucleus. Transcriptional activator involved in the sporophytic control of cell wall patterning and gametophytic control of pollen development. May play a role in the control of metabolic pathways regulating cellular transport and lipid metabolism. This chain is Basic leucine zipper 34, found in Arabidopsis thaliana (Mouse-ear cress).